The following is a 1966-amino-acid chain: Histone-lysine N-methyltransferase SETD1B (1966 aa).

Positions Met1 to Gln12 are enriched in basic residues. Residues Met1–Asn26 are disordered. Positions Val68 to Gly98 are interaction with WDR82. An RRM domain is found at Asp93–Lys181. 7 disordered regions span residues Gly235 to Gln302, Val357 to Met660, Leu675 to Ala719, Lys963 to Leu1462, Pro1501 to Ala1541, Gln1555 to Phe1606, and Ala1636 to Leu1668. Polar residues-rich tracts occupy residues Val243–Ser259, Thr265–Pro274, and Pro282–Phe300. Pro residues-rich tracts occupy residues Pro432–Glu441 and Gly449–Asp458. Over residues Glu493–Asp521 the composition is skewed to basic and acidic residues. The span at Ser531–Leu543 shows a compositional bias: low complexity. Over residues Pro592–Pro603 the composition is skewed to pro residues. Positions Glu637–Met646 are enriched in acidic residues. Residues Leu679–Ala719 are compositionally biased toward pro residues. A phosphoserine mark is found at Ser986 and Ser994. Over residues Glu995–Lys1015 the composition is skewed to basic and acidic residues. Ser1031 carries the post-translational modification Phosphoserine. The segment covering Leu1041 to Ala1064 has biased composition (low complexity). 2 stretches are compositionally biased toward acidic residues: residues Lys1067–Glu1087 and Lys1104–Thr1142. Low complexity predominate over residues Ser1148–Ser1174. The stretch at Ser1173 to Ala1204 forms a coiled coil. 2 stretches are compositionally biased toward acidic residues: residues Ser1175–Ala1197 and Gly1229–Thr1238. Phosphoserine is present on residues Ser1265, Ser1283, and Ser1335. The span at Glu1312–Pro1340 shows a compositional bias: pro residues. The segment covering Pro1383–Thr1425 has biased composition (low complexity). Positions Pro1501–Pro1514 are enriched in pro residues. The span at Met1515–Arg1524 shows a compositional bias: basic residues. Over residues Pro1580–Glu1600 the composition is skewed to pro residues. Phosphoserine is present on residues Ser1659 and Ser1663. The WDR5 interaction motif (WIN) motif lies at Gly1745 to Glu1750. The tract at residues Ser1767–Glu1800 is disordered. Positions Arg1798–Arg1803 match the RxxxRR motif motif. The SET domain occupies Lys1827 to Lys1944. An S-adenosyl-L-methionine-binding site is contributed by Tyr1943. The region spanning Val1950–Asn1966 is the Post-SET domain.

Belongs to the class V-like SAM-binding methyltransferase superfamily. In terms of assembly, component of the SET1B/COMPASS complex composed of the catalytic subunit SETD1B, WDR5, WDR82, RBBP5, ASH2L/ASH2, CXXC1/CFP1, HCFC1, DPY30 homotrimer and BOD1. Forms a core complex with the evolutionary conserved subcomplex WRAD composed of WDR5, RBBP5, ASH2L/ASH2 and DPY30 subunits; WRAD differentially stimulates the methyltransferase activity. Interacts with HCFC1 and ASH2L/ASH2. Interacts (via N-terminal region) with WDR82. Interacts (via the RRM domain) with hyperphosphorylated C-terminal domain (CTD) of RNA polymerase II large subunit (POLR2A) only in the presence of WDR82. Binds specifically to CTD heptad repeats phosphorylated on 'Ser-5' of each heptad. Interacts with RBM15. Interacts (via WIN motif) with WDR5.

Its subcellular location is the nucleus. The protein localises to the nucleus speckle. The protein resides in the chromosome. It localises to the cytoplasm. The enzyme catalyses L-lysyl(4)-[histone H3] + S-adenosyl-L-methionine = N(6)-methyl-L-lysyl(4)-[histone H3] + S-adenosyl-L-homocysteine + H(+). It catalyses the reaction N(6)-methyl-L-lysyl(4)-[histone H3] + S-adenosyl-L-methionine = N(6),N(6)-dimethyl-L-lysyl(4)-[histone H3] + S-adenosyl-L-homocysteine + H(+). It carries out the reaction N(6),N(6)-dimethyl-L-lysyl(4)-[histone H3] + S-adenosyl-L-methionine = N(6),N(6),N(6)-trimethyl-L-lysyl(4)-[histone H3] + S-adenosyl-L-homocysteine + H(+). Functionally, histone methyltransferase that catalyzes methyl group transfer from S-adenosyl-L-methionine to the epsilon-amino group of 'Lys-4' of histone H3 (H3K4) via a non-processive mechanism. Part of chromatin remodeling machinery, forms H3K4me1, H3K4me2 and H3K4me3 methylation marks at active chromatin sites where transcription and DNA repair take place. Plays an essential role in regulating the transcriptional programming of multipotent hematopoietic progenitor cells and lymphoid lineage specification during hematopoiesis. The polypeptide is Histone-lysine N-methyltransferase SETD1B (SETD1B) (Homo sapiens (Human)).